The chain runs to 962 residues: MVTPPPDVPSTSTRSMARDLQENPNRQPGEPRVSEPYHNSIVERIRHIFRTAVSSNRCRTEYQNIDLDCAYITDRIIAIGYPATGIEANFRNSKVQTQQFLTRRHGKGNVKVFNLRGGYYYDADNFDGNVICFDMTDHHPPSLELMAPFCREAKEWLEADDKHVIAVHCKAGKGRTGVMICALLIYINFYPSPRQILDYYSIIRTKNNKGVTIPSQRRYIYYYHKLRERELNYLPLRMQLIGVYVERPPKTWGGGSKIKVEVGNGSTILFKPDPLIISKSNHQRERATWLNNCDTPNEFDTGEQKYHGFVSKRAYCFMVPEDAPVFVEGDVRIDIREIGFLKKFSDGKIGHVWFNTMFACDGGLNGGHFEYVDKTQPYIGDDTSIGRKNGMRRNETPMRKIDPETGNEFESPWQIVNPPGLEKHITEEQAMENYTNYGMIPPRYTISKILHEKHEKGIVKDDYNDRKLPMGDKSYTESGKSGDIRGVGGPFEIPYKAEEHVLTFPVYEMDRALKSKDLNNGMKLHVVLRCVDTRDSKMMEKSEVFGNLAFHNESTRRLQALTQMNPKWRPEPCAFGSKGAEMHYPPSVRYSSNDGKYNGACSENLVSDFFEHRNIAVLNRYCRYFYKQRSTSRSRYPRKFRYCPLIKKHFYIPADTDDVDENGQPFFHSPEHYIKEQEKIDAEKAAKGIENTGPSTSGSSAPGTIKKTEASQSDKVKPATEDELPPARLPDNVRRFPVVGVDFENPEEESCEHKTVESIAGFEPLEHLFHESYHPNTAGNMLRQDYHTDSEVKIAEQEAKAFVDQLLNGQGVLQEFMKQFKVPSDNSFADYVTGQAEVFKAQIALLEQSEDFQRVQANAEEVDLEHTLGEAFERFGHVVEESNGSSKNPKALKTREQMVKETGKDTQKTRNHVLLHLEANHRVQIERRETCPELHPEDKIPRIAHFSENSFSDSNFDQAIYL.

The interval 1-37 is disordered; that stretch reads MVTPPPDVPSTSTRSMARDLQENPNRQPGEPRVSEPY. The Phosphatase tensin-type domain occupies 58-230; it reads CRTEYQNIDL…YYYHKLRERE (173 aa). The active-site Phosphocysteine intermediate is Cys169. The C2 tensin-type domain occupies 234 to 530; that stretch reads LPLRMQLIGV…GMKLHVVLRC (297 aa). 2 disordered regions span residues 382–416 and 689–731; these read DTSI…WQIV and IENT…RLPD. Basic and acidic residues predominate over residues 392 to 403; it reads RRNETPMRKIDP. The segment covering 692–704 has biased composition (low complexity); it reads TGPSTSGSSAPGT. Basic and acidic residues predominate over residues 706-720; the sequence is KKTEASQSDKVKPAT.

This sequence belongs to the PTEN phosphatase protein family. Interacts (via C-terminus) with vab-1 (via kinase domain); the interaction is independent of vab-1 kinase activity. Interacts with arr-1 and mpz-1; the interaction may inhibit daf-18. Interacts (via C-terminus) with daf-2 (via kinase domain). In terms of processing, phosphorylated by vab-1 on tyrosine residues which may promote daf-18 degradation. As to expression, expressed in embryo, larvae and in adult germline (at protein level). Expressed at equal levels in the 6 vulva precursor cells (VPCs) of L2 larvae and in the descendant cells of the induced VPCs (at protein level). Expressed in the uterus (at protein level). Expressed in the Z2/Z3 germline precursors, oocytes, several amphid neurons and weakly in the nerve cord (at protein level).

The protein localises to the perikaryon. It is found in the cell membrane. It localises to the cell projection. The protein resides in the axon. Its subcellular location is the dendrite. The protein localises to the cytoplasm. It is found in the nucleus. It catalyses the reaction a 1,2-diacyl-sn-glycero-3-phospho-(1D-myo-inositol-3,4,5-trisphosphate) + H2O = a 1,2-diacyl-sn-glycero-3-phospho-(1D-myo-inositol-4,5-bisphosphate) + phosphate. The enzyme catalyses O-phospho-L-seryl-[protein] + H2O = L-seryl-[protein] + phosphate. The catalysed reaction is O-phospho-L-threonyl-[protein] + H2O = L-threonyl-[protein] + phosphate. It carries out the reaction O-phospho-L-tyrosyl-[protein] + H2O = L-tyrosyl-[protein] + phosphate. It catalyses the reaction 1,2-dioctanoyl-sn-glycero-3-phospho-(1D-myo-inositol-3,4,5-trisphosphate) + H2O = 1,2-dioctanoyl-sn-glycero-3-phospho-(1D-myo-inositol-4,5-bisphosphate) + phosphate. The enzyme catalyses 1,2-dihexadecanoyl-sn-glycero-3-phospho-(1D-myo-inositol-3,4,5-trisphosphate) + H2O = 1,2-dihexadecanoyl-sn-glycero-3-phospho-(1D-myo-inositol-4,5-bisphosphate) + phosphate. Functionally, acts as a dual-specificity protein phosphatase, dephosphorylating tyrosine-, serine- and threonine-phosphorylated proteins. Also acts as a lipid phosphatase, removing the phosphate in the D3 position of the inositol ring from phosphatidylinositol 3,4,5-trisphosphate. By dephosphorylating PtdIns(3,4,5)P3 antagonizes PtdIns(3,4,5)P3 production by age-1/PI3K and thus, negatively regulates daf-2-mediated processes including dauer formation, longevity, fat metabolism, chemotaxis towards salt, thermotolerance and axon guidance. Similarly, promotes apoptosis during embryonic development by suppressing the recruitment of the prosurvival kinases akt-1/2 to the plasma membrane. In addition, regulates Z2/Z3 germline precursor cell cycle by maintaining them arrested at the G2 stage and by controlling their growth during L1 diapause. After sperm depletion in larvae and adult hermaphrodites, promotes germline stem cell quiescence and oocyte accumulation. By dephosphorylating ephrin-like receptor vab-1 on tyrosine residues, negatively regulates oocyte maturation downstream of vab-1 and upstream of mpk-1, independently of daf-2. Plays a role in postembryonic muscle arm extensions. Required for neurite outgrowth during AIY interneuron embryonic development. Mainly independently of daf-2, negatively regulates vulva induction probably by inhibiting mpk-1 phosphorylation. Both lipid and protein phosphatase activities are required for the regulation of vulva induction. Plays a role in gonad and germline development following the L1 diapause. In Caenorhabditis elegans, this protein is Phosphatidylinositol 3,4,5-trisphosphate 3-phosphatase and dual-specificity protein phosphatase daf-18.